Reading from the N-terminus, the 366-residue chain is Chorismate synthase (366 aa).

NADP(+) is bound by residues Arg-48 and Arg-54. FMN-binding positions include Arg-125–Ser-127, Asn-238–Ala-239, Gly-278, Lys-293–Ser-297, and Arg-319.

It belongs to the chorismate synthase family. Homotetramer. FMNH2 serves as cofactor.

It carries out the reaction 5-O-(1-carboxyvinyl)-3-phosphoshikimate = chorismate + phosphate. It participates in metabolic intermediate biosynthesis; chorismate biosynthesis; chorismate from D-erythrose 4-phosphate and phosphoenolpyruvate: step 7/7. Its function is as follows. Catalyzes the anti-1,4-elimination of the C-3 phosphate and the C-6 proR hydrogen from 5-enolpyruvylshikimate-3-phosphate (EPSP) to yield chorismate, which is the branch point compound that serves as the starting substrate for the three terminal pathways of aromatic amino acid biosynthesis. This reaction introduces a second double bond into the aromatic ring system. The chain is Chorismate synthase from Neisseria meningitidis serogroup B (strain ATCC BAA-335 / MC58).